The following is a 241-amino-acid chain: DNA protection during starvation protein 2 (241 aa).

The interval 25-65 (GAQSAGNGVPSTNVNTPAPNTGQSTAQNTNTASPLPYNRAT) is disordered. Residues 33–57 (VPSTNVNTPAPNTGQSTAQNTNTAS) are compositionally biased toward polar residues. Residues His-100, Asp-127, and Glu-131 each coordinate Fe cation. A compositionally biased stretch (polar residues) spans 220 to 229 (TPTDPNTGFD). The segment at 220–241 (TPTDPNTGFDINNGKPVPLRGR) is disordered.

The protein belongs to the Dps family. In terms of assembly, homododecamer. The 12 subunits form a hollow sphere into which the mineral iron core of up to 500 Fe(3+) can be deposited.

Its subcellular location is the cytoplasm. The catalysed reaction is 2 Fe(2+) + H2O2 + 2 H(+) = 2 Fe(3+) + 2 H2O. Protects DNA from oxidative damage by sequestering intracellular Fe(2+) ion and storing it in the form of Fe(3+) oxyhydroxide mineral. One hydrogen peroxide oxidizes two Fe(2+) ions, which prevents hydroxyl radical production by the Fenton reaction. The sequence is that of DNA protection during starvation protein 2 (dps2) from Deinococcus radiodurans (strain ATCC 13939 / DSM 20539 / JCM 16871 / CCUG 27074 / LMG 4051 / NBRC 15346 / NCIMB 9279 / VKM B-1422 / R1).